Here is a 417-residue protein sequence, read N- to C-terminus: UDP-N-acetylmuramoylalanine--D-glutamate ligase (417 aa).

108–114 (GSNGKTT) is a binding site for ATP.

This sequence belongs to the MurCDEF family.

The protein localises to the cytoplasm. The enzyme catalyses UDP-N-acetyl-alpha-D-muramoyl-L-alanine + D-glutamate + ATP = UDP-N-acetyl-alpha-D-muramoyl-L-alanyl-D-glutamate + ADP + phosphate + H(+). It participates in cell wall biogenesis; peptidoglycan biosynthesis. Its function is as follows. Cell wall formation. Catalyzes the addition of glutamate to the nucleotide precursor UDP-N-acetylmuramoyl-L-alanine (UMA). The polypeptide is UDP-N-acetylmuramoylalanine--D-glutamate ligase (Chlamydia pneumoniae (Chlamydophila pneumoniae)).